Here is a 227-residue protein sequence, read N- to C-terminus: Cytochrome c oxidase subunit 2 (227 aa).

Residues 1 to 14 (MAYPFQLGLQDATS) are Mitochondrial intermembrane-facing. The chain crosses the membrane as a helical span at residues 15 to 45 (PIMEELTNFHDHTLMIVFLISSLVLYIISLM). The Mitochondrial matrix segment spans residues 46 to 59 (LTTKLTHTSTMDAQ). Residues 60–87 (EVETIWTILPAVILILIALPSLRILYMM) traverse the membrane as a helical segment. Over 88–227 (DEINNPVLTV…HFENWSASMI (140 aa)) the chain is Mitochondrial intermembrane. Positions 161, 196, 198, 200, 204, and 207 each coordinate Cu cation. A Mg(2+)-binding site is contributed by E198.

The protein belongs to the cytochrome c oxidase subunit 2 family. As to quaternary structure, component of the cytochrome c oxidase (complex IV, CIV), a multisubunit enzyme composed of 14 subunits. The complex is composed of a catalytic core of 3 subunits MT-CO1, MT-CO2 and MT-CO3, encoded in the mitochondrial DNA, and 11 supernumerary subunits COX4I, COX5A, COX5B, COX6A, COX6B, COX6C, COX7A, COX7B, COX7C, COX8 and NDUFA4, which are encoded in the nuclear genome. The complex exists as a monomer or a dimer and forms supercomplexes (SCs) in the inner mitochondrial membrane with NADH-ubiquinone oxidoreductase (complex I, CI) and ubiquinol-cytochrome c oxidoreductase (cytochrome b-c1 complex, complex III, CIII), resulting in different assemblies (supercomplex SCI(1)III(2)IV(1) and megacomplex MCI(2)III(2)IV(2)). Found in a complex with TMEM177, COA6, COX18, COX20, SCO1 and SCO2. Interacts with TMEM177 in a COX20-dependent manner. Interacts with COX20. Interacts with COX16. Cu cation serves as cofactor.

Its subcellular location is the mitochondrion inner membrane. The enzyme catalyses 4 Fe(II)-[cytochrome c] + O2 + 8 H(+)(in) = 4 Fe(III)-[cytochrome c] + 2 H2O + 4 H(+)(out). In terms of biological role, component of the cytochrome c oxidase, the last enzyme in the mitochondrial electron transport chain which drives oxidative phosphorylation. The respiratory chain contains 3 multisubunit complexes succinate dehydrogenase (complex II, CII), ubiquinol-cytochrome c oxidoreductase (cytochrome b-c1 complex, complex III, CIII) and cytochrome c oxidase (complex IV, CIV), that cooperate to transfer electrons derived from NADH and succinate to molecular oxygen, creating an electrochemical gradient over the inner membrane that drives transmembrane transport and the ATP synthase. Cytochrome c oxidase is the component of the respiratory chain that catalyzes the reduction of oxygen to water. Electrons originating from reduced cytochrome c in the intermembrane space (IMS) are transferred via the dinuclear copper A center (CU(A)) of subunit 2 and heme A of subunit 1 to the active site in subunit 1, a binuclear center (BNC) formed by heme A3 and copper B (CU(B)). The BNC reduces molecular oxygen to 2 water molecules using 4 electrons from cytochrome c in the IMS and 4 protons from the mitochondrial matrix. This chain is Cytochrome c oxidase subunit 2 (MT-CO2), found in Batomys granti (Luzon hairy-tailed rat).